The sequence spans 122 residues: ATP-dependent Clp protease adapter protein ClpS (122 aa).

The protein belongs to the ClpS family. As to quaternary structure, binds to the N-terminal domain of the chaperone ClpA.

Involved in the modulation of the specificity of the ClpAP-mediated ATP-dependent protein degradation. The polypeptide is ATP-dependent Clp protease adapter protein ClpS (Pseudomonas fluorescens (strain SBW25)).